The sequence spans 626 residues: Phosphomethylpyrimidine synthase (626 aa).

Positions 1–27 (MSKQEKAISLSESAQVDQQSVQPLPNS) are disordered. Polar residues predominate over residues 10-25 (LSESAQVDQQSVQPLP). Substrate-binding positions include N232, M261, Y290, H326, 346-348 (SRG), 387-390 (DGLR), and E426. H430 contacts Zn(2+). Y453 lines the substrate pocket. Residue H494 participates in Zn(2+) binding. C574, C577, and C582 together coordinate [4Fe-4S] cluster.

Belongs to the ThiC family. Homodimer. [4Fe-4S] cluster is required as a cofactor.

The enzyme catalyses 5-amino-1-(5-phospho-beta-D-ribosyl)imidazole + S-adenosyl-L-methionine = 4-amino-2-methyl-5-(phosphooxymethyl)pyrimidine + CO + 5'-deoxyadenosine + formate + L-methionine + 3 H(+). It participates in cofactor biosynthesis; thiamine diphosphate biosynthesis. Its function is as follows. Catalyzes the synthesis of the hydroxymethylpyrimidine phosphate (HMP-P) moiety of thiamine from aminoimidazole ribotide (AIR) in a radical S-adenosyl-L-methionine (SAM)-dependent reaction. This is Phosphomethylpyrimidine synthase from Pseudomonas entomophila (strain L48).